The chain runs to 927 residues: MNMKKKEKHAIRKKSIGVASVLVGTLIGFGLLSSKEADASENSVTQSDSASNESKSNDSSSVSAAPKTDDTNVSDTKTSSNTNNGETSVAQNPAQQETTQSSSTNATTEETPVTGEATTTTTNQANTPATTQSSNTNAEELVNQTSNETTSNDTNTVSSVNSPQNSTNAENVSTTQDTSTEATPSNNESAPQSTDASNKDVVNQAVNTSAPRMRAFSLAAVAADAPVAGTDITNQLTNVTVGIDSGTTVYPHQAGYVKLNYGFSVPNSAVKGDTFKITVPKELNLNGVTSTAKVPPIMAGDQVLANGVIDSDGNVIYTFTDYVNTKDDVKATLTMPAYIDPENVKKTGNVTLATGIGSTTANKTVLVDYEKYGKFYNLSIKGTIDQIDKTNNTYRQTIYVNPSGDNVIAPVLTGNLKPNTDSNALIDQQNTSIKVYKVDNAADLSESYFVNPENFEDVTNSVNITFPNPNQYKVEFNTPDDQITTPYIVVVNGHIDPNSKGDLALRSTLYGYNSNIIWRSMSWDNEVAFNNGSGSGDGIDKPVVPEQPDEPGEIEPIPEDSDSDPGSDSGSDSNSDSGSDSGSDSTSDSGSDSASDSDSASDSDSASDSDSASDSDSASDSDSDNDSDSDSDSDSDSDSDSDSDSDSDSDSDSDSDSDSDSDSDSDSDSDSDSDSDSDSDSDSDSDSDSDSDSDSDSDSDSDSDSDSDSDSDSDSDSDSDSDSDSDSDSDSDSDSDSDSDSDSDSDSDSDSDSDSDSDSDSDSDSDSASDSDSDSDSDSDSDSDSDSDSDSDSDSDSDSDSDSDSDSESDSDSDSDSDSDSDSDSDSDSDSASDSDSGSDSDSSSDSDSESDSNSDSESVSNNNVVPPNSPKNGTNASNKNEAKDSKEPLPDTGSEDEANTSLIWGLLASIGSLLLFRRKKENKDKK.

The signal sequence occupies residues 1–39 (MNMKKKEKHAIRKKSIGVASVLVGTLIGFGLLSSKEADA). Residues 9 to 20 (HAIRKKSIGVAS) carry the YSIRK-G/S signaling motif motif. Disordered regions lie at residues 34-200 (SKEA…SNKD) and 529-898 (FNNG…SEDE). The tract at residues 40–542 (SENSVTQSDS…SGSGDGIDKP (503 aa)) is ligand binding A region. Over residues 47-65 (SDSASNESKSNDSSSVSAA) the composition is skewed to low complexity. Polar residues predominate over residues 71 to 105 (TNVSDTKTSSNTNNGETSVAQNPAQQETTQSSSTN). 2 stretches are compositionally biased toward low complexity: residues 106-132 (ATTE…ATTQ) and 143-162 (NQTS…SVNS). Residues 163-200 (PQNSTNAENVSTTQDTSTEATPSNNESAPQSTDASNKD) are compositionally biased toward polar residues. Residues 547–565 (QPDEPGEIEPIPEDSDSDP) are compositionally biased toward acidic residues. Over residues 566–598 (GSDSGSDSNSDSGSDSGSDSTSDSGSDSASDSD) the composition is skewed to low complexity. The span at 599–855 (SASDSDSASD…DSDSESDSNS (257 aa)) shows a compositional bias: acidic residues. The span at 856 to 867 (DSESVSNNNVVP) shows a compositional bias: low complexity. Basic and acidic residues predominate over residues 881-890 (NEAKDSKEPL). Residues 890–894 (LPDTG) carry the LPXTG sorting signal motif. T893 bears the Pentaglycyl murein peptidoglycan amidated threonine mark. A propeptide spans 894–927 (GSEDEANTSLIWGLLASIGSLLLFRRKKENKDKK) (removed by sortase).

This sequence belongs to the serine-aspartate repeat-containing protein (SDr) family.

Its subcellular location is the secreted. It localises to the cell wall. Cell surface-associated protein implicated in virulence. Promotes bacterial attachment exclusively to the gamma-chain of human fibrinogen. Induces formation of bacterial clumps, which diminish the ability of group IIA phospholipase A2 to cause bacterial phospholipid hydrolysis and killing. Significantly decreases macrophage phagocytosis possibly thanks to the clumps, clumped bacteria being too large to be phagocytosed. Dominant factor responsible for human platelet aggregation, which may be an important mechanism for initiating infective endocarditis. Enhances spleen cell proliferative response in vitro, contributing significantly to the immunostimulatory activity of S.aureus. In Staphylococcus aureus (strain NCTC 8325 / PS 47), this protein is Clumping factor A (clfA).